The sequence spans 579 residues: Trehalase (579 aa).

Residues 1-15 form the signal peptide; the sequence is MRLFLLLVGLTTVIA. N-linked (GlcNAc...) asparagine glycosylation is found at N29 and N58. Substrate contacts are provided by residues R161, 168–169, N205, 214–216, 279–281, and G313; these read WD, RSQ, and RPE. A glycan (N-linked (GlcNAc...) asparagine) is linked at N205. D315 acts as the Proton donor/acceptor in catalysis. N331 is a glycosylation site (N-linked (GlcNAc...) asparagine). The active-site Proton donor/acceptor is E513. E528 contacts substrate. Over residues 560 to 569 the composition is skewed to polar residues; sequence DASANNGQSN. The disordered stretch occupies residues 560–579; that stretch reads DASANNGQSNEESETDSKEK.

The protein belongs to the glycosyl hydrolase 37 family. As to expression, in midgut and Malpighian tubules.

It is found in the basolateral cell membrane. It catalyses the reaction alpha,alpha-trehalose + H2O = alpha-D-glucose + beta-D-glucose. Involved in uptake of hemolymph trehalose into epithelial cells in the midgut of feeding larvae. In Bombyx mori (Silk moth), this protein is Trehalase.